The following is a 243-amino-acid chain: Type III pantothenate kinase (243 aa).

Residue 7–14 (DLGNSRFK) participates in ATP binding. Substrate is bound by residues Tyr-91 and 98-101 (GVDR). Asp-100 acts as the Proton acceptor in catalysis. Thr-122 lines the ATP pocket. Position 172 (Thr-172) interacts with substrate.

Belongs to the type III pantothenate kinase family. Homodimer. It depends on NH4(+) as a cofactor. Requires K(+) as cofactor.

The protein localises to the cytoplasm. It catalyses the reaction (R)-pantothenate + ATP = (R)-4'-phosphopantothenate + ADP + H(+). Its pathway is cofactor biosynthesis; coenzyme A biosynthesis; CoA from (R)-pantothenate: step 1/5. Functionally, catalyzes the phosphorylation of pantothenate (Pan), the first step in CoA biosynthesis. This is Type III pantothenate kinase from Stenotrophomonas maltophilia (strain K279a).